The sequence spans 580 residues: Acyl-coenzyme A synthetase ACSM4, mitochondrial (580 aa).

Residues 1–22 (MKVLLRCQRLRFIWLAKPAGRH) constitute a mitochondrion transit peptide. Residues 229–237 (TSGTTGSPK), 368–373 (EGYGQT), aspartate 455, arginine 470, and lysine 566 contribute to the ATP site.

This sequence belongs to the ATP-dependent AMP-binding enzyme family. It depends on Mg(2+) as a cofactor. Mn(2+) is required as a cofactor. As to expression, detected in adult olfactory epithelium.

The protein localises to the mitochondrion. The catalysed reaction is a medium-chain fatty acid + ATP + CoA = a medium-chain fatty acyl-CoA + AMP + diphosphate. It carries out the reaction hexanoate + ATP + CoA = hexanoyl-CoA + AMP + diphosphate. The enzyme catalyses octanoate + ATP + CoA = octanoyl-CoA + AMP + diphosphate. It catalyses the reaction decanoate + ATP + CoA = decanoyl-CoA + AMP + diphosphate. The catalysed reaction is dodecanoate + ATP + CoA = dodecanoyl-CoA + AMP + diphosphate. Functionally, catalyzes the activation of fatty acids by CoA to produce an acyl-CoA, the first step in fatty acid metabolism. Capable of activating medium-chain fatty acids with a preference for C6-12 fatty acids. The sequence is that of Acyl-coenzyme A synthetase ACSM4, mitochondrial (Acsm4) from Rattus norvegicus (Rat).